Consider the following 155-residue polypeptide: MKLNELRDCEGATKNRKRIGRGIGSGTGKTGGRGVKGQKSRSGVSLNGFEGGQMPIYRRLPKRGFKNFFSKIYNEVSLGRIQLAVDTGKLNIEKPVDMIALKEAGIIRREKDGVRLLSDGDLKAKITFHVSGASQAARVKVEKVGGQVISPEVVG.

A compositionally biased stretch (basic and acidic residues) spans 1 to 13 (MKLNELRDCEGAT). Positions 1 to 47 (MKLNELRDCEGATKNRKRIGRGIGSGTGKTGGRGVKGQKSRSGVSLN) are disordered. Over residues 21–35 (RGIGSGTGKTGGRGV) the composition is skewed to gly residues.

The protein belongs to the universal ribosomal protein uL15 family. Part of the 50S ribosomal subunit.

Binds to the 23S rRNA. The sequence is that of Large ribosomal subunit protein uL15 from Bartonella tribocorum (strain CIP 105476 / IBS 506).